Reading from the N-terminus, the 269-residue chain is Glutamate 5-kinase (269 aa).

Lysine 14 provides a ligand contact to ATP. Positions 54, 141, and 157 each coordinate substrate. ATP is bound by residues 177 to 178 (SD) and 219 to 225 (TGGMVTK).

The protein belongs to the glutamate 5-kinase family.

The protein localises to the cytoplasm. It carries out the reaction L-glutamate + ATP = L-glutamyl 5-phosphate + ADP. Its pathway is amino-acid biosynthesis; L-proline biosynthesis; L-glutamate 5-semialdehyde from L-glutamate: step 1/2. Its function is as follows. Catalyzes the transfer of a phosphate group to glutamate to form L-glutamate 5-phosphate. This chain is Glutamate 5-kinase, found in Clostridium perfringens (strain 13 / Type A).